A 119-amino-acid polypeptide reads, in one-letter code: MLPSQHKLSNSEQFRATIRKGKRAGRSTVVLHFYAEATAGNLATAGGPRFGLVVSKAVGNAVTRHRVSRQLRHVVIAMKDQFPASSHVVVRALPPAATASSEELRADVQAALDKLNRKR.

Belongs to the RnpA family. Consists of a catalytic RNA component (M1 or rnpB) and a protein subunit.

The catalysed reaction is Endonucleolytic cleavage of RNA, removing 5'-extranucleotides from tRNA precursor.. Functionally, RNaseP catalyzes the removal of the 5'-leader sequence from pre-tRNA to produce the mature 5'-terminus. It can also cleave other RNA substrates such as 4.5S RNA. The protein component plays an auxiliary but essential role in vivo by binding to the 5'-leader sequence and broadening the substrate specificity of the ribozyme. The polypeptide is Ribonuclease P protein component (Corynebacterium diphtheriae (strain ATCC 700971 / NCTC 13129 / Biotype gravis)).